The sequence spans 449 residues: C4-dicarboxylate transport protein (449 aa).

Helical transmembrane passes span 18 to 38, 61 to 81, 93 to 113, 159 to 179, 202 to 222, 244 to 264, 311 to 331, and 369 to 389; these read PFYL…ALLG, MIIS…VAHV, VYFL…AHVV, FVGD…IALA, LVQM…AFTI, SLLF…FSIL, GYSF…LFIA, and AATL…ILGV.

The protein belongs to the dicarboxylate/amino acid:cation symporter (DAACS) (TC 2.A.23) family.

It localises to the cell inner membrane. Functionally, responsible for the transport of dicarboxylates such as succinate, fumarate, and malate from the periplasm across the membrane. This Xylella fastidiosa (strain M12) protein is C4-dicarboxylate transport protein.